Reading from the N-terminus, the 405-residue chain is Scarecrow-like protein 23 (405 aa).

The disordered stretch occupies residues Met1–Lys20. The 370-residue stretch at Glu31–Lys400 folds into the GRAS domain. The segment at Ile38–Ser102 is leucine repeat I (LRI). Positions Leu45 to Glu49 match the LxCxE motif motif. Residues Leu121–Gly186 are VHIID. The short motif at Val152–Asp156 is the VHIID element. Positions Ser196–Ser228 are leucine repeat II (LRII). The tract at residues Val238–Asn327 is PFYRE. Residues Ala330–Lys400 are SAW.

It belongs to the GRAS family. Interacts with SHR. Expressed in seedlings, cotyledons, shoot apex, leaves and flowers.

It localises to the nucleus. Probable transcription factor involved in plant development. This chain is Scarecrow-like protein 23 (SCL23), found in Arabidopsis thaliana (Mouse-ear cress).